Consider the following 137-residue polypeptide: Acidic phospholipase A2 1 (137 aa).

A signal peptide spans 1 to 11 (LVAVCVSLLGA). A propeptide spanning residues 12–19 (ANIPPQPL) is cleaved from the precursor. Disulfide bonds link C30-C89, C44-C136, C46-C62, C61-C117, C68-C110, C78-C103, and C96-C108. The Ca(2+) site is built by Y45, G47, and G49. Tridecanoate is bound by residues G49 and H65. H65 is a catalytic residue. D66 serves as a coordination point for Ca(2+). Residue D111 is part of the active site.

In terms of assembly, monomer. Requires Ca(2+) as cofactor. In terms of tissue distribution, expressed by the venom gland.

It localises to the secreted. It catalyses the reaction a 1,2-diacyl-sn-glycero-3-phosphocholine + H2O = a 1-acyl-sn-glycero-3-phosphocholine + a fatty acid + H(+). Functionally, snake venom phospholipase A2 (PLA2) that shows anticoagulant and neurotoxic activities. PLA2 catalyzes the calcium-dependent hydrolysis of the 2-acyl groups in 3-sn-phosphoglycerides. The polypeptide is Acidic phospholipase A2 1 (Bungarus caeruleus (Indian krait)).